The primary structure comprises 512 residues: GMP synthase [glutamine-hydrolyzing] (512 aa).

One can recognise a Glutamine amidotransferase type-1 domain in the interval 7 to 197; sequence TIIVLDFGSQ…VFGVCGCSEG (191 aa). Residue cysteine 84 is the Nucleophile of the active site. Residues histidine 171 and glutamate 173 contribute to the active site. The GMPS ATP-PPase domain maps to 198 to 387; sequence WNMENFIEVE…LGIPDEIVWR (190 aa). 225-231 is a binding site for ATP; that stretch reads SGGVDSS.

As to quaternary structure, homodimer.

It catalyses the reaction XMP + L-glutamine + ATP + H2O = GMP + L-glutamate + AMP + diphosphate + 2 H(+). It participates in purine metabolism; GMP biosynthesis; GMP from XMP (L-Gln route): step 1/1. Its function is as follows. Catalyzes the synthesis of GMP from XMP. The sequence is that of GMP synthase [glutamine-hydrolyzing] from Bacillus cereus (strain G9842).